The chain runs to 329 residues: GTP 3',8-cyclase (329 aa).

Residues 8-234 (AFARKFYYLR…QIRQRSDGPA (227 aa)) form the Radical SAM core domain. Position 17 (Arg17) interacts with GTP. [4Fe-4S] cluster is bound by residues Cys24 and Cys28. Position 30 (Tyr30) interacts with S-adenosyl-L-methionine. Cys31 is a [4Fe-4S] cluster binding site. Position 68 (Arg68) interacts with GTP. Residue Gly72 coordinates S-adenosyl-L-methionine. Thr99 lines the GTP pocket. An S-adenosyl-L-methionine-binding site is contributed by Ser123. Residue Lys160 participates in GTP binding. Met194 is an S-adenosyl-L-methionine binding site. [4Fe-4S] cluster-binding residues include Cys257 and Cys260. A GTP-binding site is contributed by 262–264 (RLR). Residue Cys274 coordinates [4Fe-4S] cluster.

This sequence belongs to the radical SAM superfamily. MoaA family. Monomer and homodimer. [4Fe-4S] cluster serves as cofactor.

It carries out the reaction GTP + AH2 + S-adenosyl-L-methionine = (8S)-3',8-cyclo-7,8-dihydroguanosine 5'-triphosphate + 5'-deoxyadenosine + L-methionine + A + H(+). It functions in the pathway cofactor biosynthesis; molybdopterin biosynthesis. In terms of biological role, catalyzes the cyclization of GTP to (8S)-3',8-cyclo-7,8-dihydroguanosine 5'-triphosphate. The polypeptide is GTP 3',8-cyclase (Klebsiella pneumoniae subsp. pneumoniae (strain ATCC 700721 / MGH 78578)).